We begin with the raw amino-acid sequence, 557 residues long: NADH-quinone oxidoreductase subunit C/D (557 aa).

Residues 1-13 (MSLEEQQSDDPAE) show a composition bias toward acidic residues. The interval 1–20 (MSLEEQQSDDPAELESGVSR) is disordered. Residues 1-174 (MSLEEQQSDD…ATLREHANPL (174 aa)) form an NADH dehydrogenase I subunit C region. Residues 184-557 (NTMYINIGPH…LDIVLGEVDR (374 aa)) form an NADH dehydrogenase I subunit D region. K517 participates in a covalent cross-link: Glycyl lysine isopeptide (Lys-Gly) (interchain with G-Cter in SAMP2).

The protein in the N-terminal section; belongs to the complex I 30 kDa subunit family. This sequence in the C-terminal section; belongs to the complex I 49 kDa subunit family. In terms of assembly, NDH-1 is composed of 13 different subunits. Subunits NuoB, CD, E, F, and G constitute the peripheral sector of the complex.

The protein localises to the cell membrane. The enzyme catalyses a quinone + NADH + 5 H(+)(in) = a quinol + NAD(+) + 4 H(+)(out). NDH-1 shuttles electrons from NADH, via FMN and iron-sulfur (Fe-S) centers, to quinones in the respiratory chain. Couples the redox reaction to proton translocation (for every two electrons transferred, four hydrogen ions are translocated across the cytoplasmic membrane), and thus conserves the redox energy in a proton gradient. This is NADH-quinone oxidoreductase subunit C/D (nuoCD) from Haloferax volcanii (strain ATCC 29605 / DSM 3757 / JCM 8879 / NBRC 14742 / NCIMB 2012 / VKM B-1768 / DS2) (Halobacterium volcanii).